Reading from the N-terminus, the 211-residue chain is Protein-L-isoaspartate O-methyltransferase (211 aa).

Residue serine 60 is part of the active site.

The protein belongs to the methyltransferase superfamily. L-isoaspartyl/D-aspartyl protein methyltransferase family.

The protein localises to the cytoplasm. It catalyses the reaction [protein]-L-isoaspartate + S-adenosyl-L-methionine = [protein]-L-isoaspartate alpha-methyl ester + S-adenosyl-L-homocysteine. Functionally, catalyzes the methyl esterification of L-isoaspartyl residues in peptides and proteins that result from spontaneous decomposition of normal L-aspartyl and L-asparaginyl residues. It plays a role in the repair and/or degradation of damaged proteins. This Pseudomonas aeruginosa (strain LESB58) protein is Protein-L-isoaspartate O-methyltransferase.